The sequence spans 369 residues: Ribosomal RNA large subunit methyltransferase M (369 aa).

S-adenosyl-L-methionine contacts are provided by residues Ser-198, 231 to 234 (APGG), Asp-250, Asp-270, and Asp-287. Lys-316 acts as the Proton acceptor in catalysis.

It belongs to the class I-like SAM-binding methyltransferase superfamily. RNA methyltransferase RlmE family. RlmM subfamily. As to quaternary structure, monomer.

It localises to the cytoplasm. The enzyme catalyses cytidine(2498) in 23S rRNA + S-adenosyl-L-methionine = 2'-O-methylcytidine(2498) in 23S rRNA + S-adenosyl-L-homocysteine + H(+). Catalyzes the 2'-O-methylation at nucleotide C2498 in 23S rRNA. This chain is Ribosomal RNA large subunit methyltransferase M, found in Idiomarina loihiensis (strain ATCC BAA-735 / DSM 15497 / L2-TR).